The following is a 263-amino-acid chain: Acyl-[acyl-carrier-protein]--UDP-N-acetylglucosamine O-acyltransferase (263 aa).

It belongs to the transferase hexapeptide repeat family. LpxA subfamily. Homotrimer.

The protein localises to the cytoplasm. The catalysed reaction is a (3R)-hydroxyacyl-[ACP] + UDP-N-acetyl-alpha-D-glucosamine = a UDP-3-O-[(3R)-3-hydroxyacyl]-N-acetyl-alpha-D-glucosamine + holo-[ACP]. It functions in the pathway glycolipid biosynthesis; lipid IV(A) biosynthesis; lipid IV(A) from (3R)-3-hydroxytetradecanoyl-[acyl-carrier-protein] and UDP-N-acetyl-alpha-D-glucosamine: step 1/6. Involved in the biosynthesis of lipid A, a phosphorylated glycolipid that anchors the lipopolysaccharide to the outer membrane of the cell. The polypeptide is Acyl-[acyl-carrier-protein]--UDP-N-acetylglucosamine O-acyltransferase (Xanthomonas oryzae pv. oryzae (strain PXO99A)).